The chain runs to 350 residues: Small ribosomal subunit biogenesis GTPase RsgA (350 aa).

Residues 1–30 (MSKRKLTQNQQRRIQSNNAKTLHRHQHRHK) form a disordered region. Over residues 7–20 (TQNQQRRIQSNNAK) the composition is skewed to polar residues. The segment covering 21–30 (TLHRHQHRHK) has biased composition (basic residues). The CP-type G domain occupies 106–274 (HNQIVRPDYY…LIDSPGIREF (169 aa)). GTP contacts are provided by residues 162 to 165 (NKAD) and 216 to 224 (GQSGVGKSS). The Zn(2+) site is built by Cys298, Cys303, His305, and Cys311.

It belongs to the TRAFAC class YlqF/YawG GTPase family. RsgA subfamily. As to quaternary structure, monomer. Associates with 30S ribosomal subunit, binds 16S rRNA. Zn(2+) serves as cofactor.

It is found in the cytoplasm. In terms of biological role, one of several proteins that assist in the late maturation steps of the functional core of the 30S ribosomal subunit. Helps release RbfA from mature subunits. May play a role in the assembly of ribosomal proteins into the subunit. Circularly permuted GTPase that catalyzes slow GTP hydrolysis, GTPase activity is stimulated by the 30S ribosomal subunit. This chain is Small ribosomal subunit biogenesis GTPase RsgA, found in Histophilus somni (strain 2336) (Haemophilus somnus).